Consider the following 94-residue polypeptide: UPF0298 protein SZO_03600 (94 aa).

The protein belongs to the UPF0298 family.

It localises to the cytoplasm. This Streptococcus equi subsp. zooepidemicus (strain H70) protein is UPF0298 protein SZO_03600.